A 1470-amino-acid polypeptide reads, in one-letter code: Transient receptor potential cation channel subfamily M member 2 (1470 aa).

At 1 to 725 (MDEAALEPTL…GELSVDNPHW (725 aa)) the chain is on the cytoplasmic side. ADP-D-ribose-binding positions include tyrosine 267, arginine 274, 305-308 (GPGT), and arginine 330. Residues 726–738 (KVLLCMIFFPLIY) lie within the membrane without spanning it. The Cytoplasmic segment spans residues 739 to 808 (TGFLTFRRDE…MSFLKSPQVK (70 aa)). Residues 809–829 (FYWNIASYFGFLWLFAVVLMI) traverse the membrane as a helical segment. Residues 830–836 (DFQTSPS) are Extracellular-facing. A helical membrane pass occupies residues 837-857 (WRELLLYVWLTSLVCEEIRQL). Residues glutamate 853 and glutamine 856 each contribute to the Ca(2+) site. Over 858–876 (YHDFDGSGFRRKAKMYIKD) the chain is Cytoplasmic. A helical membrane pass occupies residues 877–897 (LWNILDVLSIVLFIAGLICRL). Ca(2+) is bound at residue asparagine 879. Topologically, residues 898–905 (QASDTVFY) are extracellular. Residues 906 to 926 (IGKVILCIDFIIFCLRLMAIF) traverse the membrane as a helical segment. At 927–941 (SISRTLGPKIIIVRR) the chain is on the cytoplasmic side. The chain crosses the membrane as a helical span at residues 942–968 (MMLDLFFFMFLLSIWVVAYGVAKQGIL). Over 969–977 (IENEERLNW) the chain is Extracellular. The segment at residues 978 to 1002 (IIRGAVYEPYITIFGNFPTNIDNTL) is an intramembrane region (pore-forming). A Selectivity filter motif is present at residues 991–993 (FGN). The Extracellular segment spans residues 1003 to 1034 (FDISSCSVNASDPLKPKCPMLNADNTPVFPEW). A disulfide bond links cysteine 1008 and cysteine 1020. Asparagine 1011 carries an N-linked (GlcNAc...) asparagine glycan. A helical membrane pass occupies residues 1035 to 1059 (LTIMMLCVYLLFANILLLNLLIAIF). The Cytoplasmic segment spans residues 1060–1087 (NYTFQEVQDNTDTIWKFQRYELIKEYHS). Glutamate 1084 lines the Ca(2+) pocket. The stretch at 1088 to 1105 (RPALPPPFILLSHLILFI) is an intramembrane region. The Cytoplasmic segment spans residues 1106–1470 (RGVFLRDLPQ…QIAHHHNTYF (365 aa)). The divergent Nudix hydrolase-like domain stretch occupies residues 1157–1470 (HRIHDTAEKV…QIAHHHNTYF (314 aa)). Disordered stretches follow at residues 1215 to 1256 (KSKV…LQYP) and 1281 to 1314 (PPVY…GKGA). Residues 1231–1244 (DDGDSSGQETDDEE) show a composition bias toward acidic residues. The span at 1283-1295 (VYNQQDSSESDTS) shows a compositional bias: polar residues. The ADP-D-ribose site is built by aspartate 1398 and arginine 1400.

This sequence belongs to the transient receptor (TC 1.A.4) family. LTrpC subfamily. TRPM2 sub-subfamily. As to quaternary structure, homotetramer.

The protein localises to the cell membrane. It carries out the reaction Ca(2+)(in) = Ca(2+)(out). It catalyses the reaction Na(+)(in) = Na(+)(out). With respect to regulation, activated by intracellular ADP-ribose. Ca(2+) and PI(4,5)P2 are required for channel opening by ADP-ribose. Nonselective, voltage-independent cation channel that mediates Ca(2+) influx, leading to increased cytoplasmic Ca(2+) levels. Functions as a ligand-gated ion channel, gated by intracellular adenosine diphosphate ribose (ADP-ribose), Ca(2+), warm temperature, and oxidative stress. Binding of ADP-ribose to the cytoplasmic N-terminal region causes a conformation change; the channel is primed but still requires Ca(2+) binding to trigger channel opening. The polypeptide is Transient receptor potential cation channel subfamily M member 2 (Danio rerio (Zebrafish)).